We begin with the raw amino-acid sequence, 246 residues long: Probable transcriptional regulatory protein Pden_1905 (246 aa).

The disordered stretch occupies residues 1 to 21 (MAGHSKWANIQHRKGKQDKLR).

It belongs to the TACO1 family.

The protein resides in the cytoplasm. The polypeptide is Probable transcriptional regulatory protein Pden_1905 (Paracoccus denitrificans (strain Pd 1222)).